The following is a 239-amino-acid chain: uncharacterized protein (239 aa).

Residues R193–S214 are disordered.

The protein localises to the nucleus. This is an uncharacterized protein from Schizosaccharomyces pombe (strain 972 / ATCC 24843) (Fission yeast).